We begin with the raw amino-acid sequence, 915 residues long: MDYKETIELPSTTFPMRASLPENEPKRYEKWREEKVYAKMQKNREGAKECFNLHDGPPYANGHLHIGHALNKILKDTIVKYHYFQGKKVSYVPGWDCHGLPIEQQVEKKLGKEKKDSLPKEKIRELCRAHAAEFIAIQKSEFLELGVVGDFENPYKTMDFPFEAAIYRALCQIAQKGLLAERSKPVYWSWACKTALAEAEVEYQDKVSDSVYVAFPLQKEALERLGVKRAVLVIWTTTPWTLPANVAVALRPKELYVLMSDGKVVAKNLVEKLTALGVVGGSILQEFDSSTLENLLAQNPLNGRDSRIVLGEHVEVSDGTGCVHTAPGHGEDDYRVGLRYNLPVLMPVDDEGRFDETIQRESLLPEADSFVGMHIFEAQKRILGLLGDALLKHTQITHSYPHCWRSHEPVIFRATKQWFVLMDESIQGVGKSLREIALEEIQKTCFYPDHGIKRLGSMIENRPDWCISRQRDWGVPIAFFRDRQSGEMIFDAEVLEHIAGIFEQEGCDAWWSRDNAYLLPASWKNRADSLEKIHHILDVWFDSGSTWKAVLLSSAYEAGNYPASMYLEGSDQHRGWFQSSLLVSCAINHHAPYQSILTHGFTVDEKGEKMSKSKGNVIAPKDVLKEFGSEILRLWVASSDYQSDLKISQNILKQVAENYRKIRNTIRFLLANTNDLERLSPLEDLSEIDRWFMQEARVALEETNALFGRYDFSKGLQEINYFITNALSGIYLDLCKDSLYCDGKNSKTRRASQSAMAYTLRALLATLAPVLTYTVDEALEHAGEVLKGGAQSVFDLVYEPLPLVEAPKVDFVKLEELRAKFFEVVDGLKKEKRLKNTLEVNLLLPPKEEDFGGLAKWMMVSEVLKEAKGEELASFELAGLTYRLLRATLHRCPRCWQFVSPKEETLCERCAGAIG.

The short motif at 58–68 is the 'HIGH' region element; that stretch reads PYANGHLHIGH. Glutamate 568 is an L-isoleucyl-5'-AMP binding site. Residues 609–613 carry the 'KMSKS' region motif; that stretch reads KMSKS. Lysine 612 contacts ATP. Positions 892, 895, 907, and 910 each coordinate Zn(2+).

The protein belongs to the class-I aminoacyl-tRNA synthetase family. IleS type 1 subfamily. As to quaternary structure, monomer. Zn(2+) is required as a cofactor.

The protein localises to the cytoplasm. The catalysed reaction is tRNA(Ile) + L-isoleucine + ATP = L-isoleucyl-tRNA(Ile) + AMP + diphosphate. Its function is as follows. Catalyzes the attachment of isoleucine to tRNA(Ile). As IleRS can inadvertently accommodate and process structurally similar amino acids such as valine, to avoid such errors it has two additional distinct tRNA(Ile)-dependent editing activities. One activity is designated as 'pretransfer' editing and involves the hydrolysis of activated Val-AMP. The other activity is designated 'posttransfer' editing and involves deacylation of mischarged Val-tRNA(Ile). In Wolinella succinogenes (strain ATCC 29543 / DSM 1740 / CCUG 13145 / JCM 31913 / LMG 7466 / NCTC 11488 / FDC 602W) (Vibrio succinogenes), this protein is Isoleucine--tRNA ligase.